The following is a 321-amino-acid chain: tRNA U34 carboxymethyltransferase (321 aa).

Carboxy-S-adenosyl-L-methionine contacts are provided by residues Lys-90, Trp-104, Lys-109, Gly-129, 151–153, 180–181, Met-195, Tyr-199, and Arg-314; these read DPT and IE.

The protein belongs to the class I-like SAM-binding methyltransferase superfamily. CmoB family. In terms of assembly, homotetramer.

The catalysed reaction is carboxy-S-adenosyl-L-methionine + 5-hydroxyuridine(34) in tRNA = 5-carboxymethoxyuridine(34) in tRNA + S-adenosyl-L-homocysteine + H(+). In terms of biological role, catalyzes carboxymethyl transfer from carboxy-S-adenosyl-L-methionine (Cx-SAM) to 5-hydroxyuridine (ho5U) to form 5-carboxymethoxyuridine (cmo5U) at position 34 in tRNAs. The protein is tRNA U34 carboxymethyltransferase of Histophilus somni (strain 129Pt) (Haemophilus somnus).